The following is a 262-amino-acid chain: Acyl-[acyl-carrier-protein]--UDP-N-acetylglucosamine O-acyltransferase (262 aa).

This sequence belongs to the transferase hexapeptide repeat family. LpxA subfamily. In terms of assembly, homotrimer.

It localises to the cytoplasm. The enzyme catalyses a (3R)-hydroxyacyl-[ACP] + UDP-N-acetyl-alpha-D-glucosamine = a UDP-3-O-[(3R)-3-hydroxyacyl]-N-acetyl-alpha-D-glucosamine + holo-[ACP]. It participates in glycolipid biosynthesis; lipid IV(A) biosynthesis; lipid IV(A) from (3R)-3-hydroxytetradecanoyl-[acyl-carrier-protein] and UDP-N-acetyl-alpha-D-glucosamine: step 1/6. In terms of biological role, involved in the biosynthesis of lipid A, a phosphorylated glycolipid that anchors the lipopolysaccharide to the outer membrane of the cell. This Salmonella paratyphi B (strain ATCC BAA-1250 / SPB7) protein is Acyl-[acyl-carrier-protein]--UDP-N-acetylglucosamine O-acyltransferase.